A 520-amino-acid chain; its full sequence is Cysteine--tRNA ligase (520 aa).

C29 serves as a coordination point for Zn(2+). The 'HIGH' region motif lies at 31-41 (PTVYNYPHLGN). 3 residues coordinate Zn(2+): C227, H252, and E256. Positions 301–305 (KMSKS) match the 'KMSKS' region motif. K304 lines the ATP pocket.

It belongs to the class-I aminoacyl-tRNA synthetase family. As to quaternary structure, monomer. The cofactor is Zn(2+).

Its subcellular location is the cytoplasm. It catalyses the reaction tRNA(Cys) + L-cysteine + ATP = L-cysteinyl-tRNA(Cys) + AMP + diphosphate. In Treponema pallidum (strain Nichols), this protein is Cysteine--tRNA ligase (cysS).